Reading from the N-terminus, the 175-residue chain is Phosphopantetheine adenylyltransferase (175 aa).

Serine 10 lines the substrate pocket. ATP-binding positions include 10–11 and histidine 18; that span reads SF. The substrate site is built by lysine 42, leucine 74, and arginine 88. Residues 89 to 91, glutamate 99, and 124 to 130 contribute to the ATP site; these read GMR and WIFTSSS.

This sequence belongs to the bacterial CoaD family. In terms of assembly, homohexamer. Requires Mg(2+) as cofactor.

It localises to the cytoplasm. It carries out the reaction (R)-4'-phosphopantetheine + ATP + H(+) = 3'-dephospho-CoA + diphosphate. It functions in the pathway cofactor biosynthesis; coenzyme A biosynthesis; CoA from (R)-pantothenate: step 4/5. In terms of biological role, reversibly transfers an adenylyl group from ATP to 4'-phosphopantetheine, yielding dephospho-CoA (dPCoA) and pyrophosphate. The sequence is that of Phosphopantetheine adenylyltransferase from Desulfatibacillum aliphaticivorans.